The primary structure comprises 253 residues: Large ribosomal subunit protein bL28m (253 aa).

The transit peptide at 1 to 55 (MPLHKYPPALWDVLKLKDGIYARLPEHYRRSLLEKHKPYPVHWKPHGLKYRLNPK) directs the protein to the mitochondrion.

The protein belongs to the bacterial ribosomal protein bL28 family. Component of the mitochondrial ribosome large subunit (39S) which comprises a 16S rRNA and about 50 distinct proteins.

Its subcellular location is the mitochondrion. The protein is Large ribosomal subunit protein bL28m (mrpl28) of Xenopus laevis (African clawed frog).